The following is a 250-amino-acid chain: NAD-dependent protein deacetylase (250 aa).

The region spanning 1 to 244 (MECDKVGDLL…PCVVDYIKSQ (244 aa)) is the Deacetylase sirtuin-type domain. NAD(+)-binding residues include Ala-22, Thr-26, Phe-33, Arg-34, Gln-98, Ile-100, Asp-101, and His-116. A nicotinamide-binding site is contributed by Phe-33. Positions 100 and 101 each coordinate nicotinamide. Residue His-116 is the Proton acceptor of the active site. The Zn(2+) site is built by Cys-124, Cys-127, Cys-149, and Cys-151. Ser-187, Ser-188, Asn-212, and Val-230 together coordinate NAD(+).

The protein belongs to the sirtuin family. Class U subfamily. Requires Zn(2+) as cofactor.

The protein resides in the cytoplasm. The enzyme catalyses N(6)-acetyl-L-lysyl-[protein] + NAD(+) + H2O = 2''-O-acetyl-ADP-D-ribose + nicotinamide + L-lysyl-[protein]. Functionally, NAD-dependent protein deacetylase which modulates the activities of several enzymes which are inactive in their acetylated form. Deacetylates the N-terminal lysine residue of Alba, the major archaeal chromatin protein and that, in turn, increases Alba's DNA binding affinity, thereby repressing transcription. The protein is NAD-dependent protein deacetylase of Sulfurisphaera tokodaii (strain DSM 16993 / JCM 10545 / NBRC 100140 / 7) (Sulfolobus tokodaii).